We begin with the raw amino-acid sequence, 287 residues long: MDFVLNTIQWLREVPHNFKGEFATVVFDDSADILVYCCVLYILLVFMVPEHIMKNREPFNLRLPFVFWNIGLCLFSFCGAYSCVKNMIALYWERGFYRTTCFFDSSVAYDGEFAFWVFYFILSKIPEMIDTVFLVFQKKPVIFLHWYHHLTVAIFCWHAGHALIPSGLWFATMNYCVHSIMYFYYFMCACGMRKFIRPIAPFITMMQLLQMVAGTLIVLYTAYHSYLGESGCEVDRTSIRLGLVMYGSYFFLFAVLFGKLYLKKQVKPSGTASAYAMSKKRNGEKMA.

3 helical membrane-spanning segments follow: residues 33–53 (ILVY…EHIM), 64–84 (PFVF…YSCV), and 115–135 (FWVF…VFLV). The HxxHH motif signature appears at 145–149 (HWYHH). The Nucleophile role is filled by histidine 148. Helical transmembrane passes span 150 to 170 (LTVA…GLWF), 172 to 192 (TMNY…ACGM), 199 to 219 (IAPF…LIVL), and 241 to 261 (LGLV…GKLY).

It belongs to the ELO family.

It localises to the membrane. The catalysed reaction is a very-long-chain acyl-CoA + malonyl-CoA + H(+) = a very-long-chain 3-oxoacyl-CoA + CO2 + CoA. Its function is as follows. Involved in the synthesis of fatty acids. Elongates C16:0 and C18:0 fatty acids to C26:0, with C24:0 being the main product. The sequence is that of Very long chain fatty acid elongase 4 from Trypanosoma cruzi (strain CL Brener).